A 338-amino-acid polypeptide reads, in one-letter code: Ketol-acid reductoisomerase (NADP(+)) (338 aa).

In terms of domain architecture, KARI N-terminal Rossmann spans 1–181 (MQIFYDKDCD…GGGRTGIIET (181 aa)). Residues 24–27 (YGSQ), Arg-47, Ser-50, Ser-52, and 82–85 (DEFQ) contribute to the NADP(+) site. His-107 is a catalytic residue. Gly-133 is a binding site for NADP(+). In terms of domain architecture, KARI C-terminal knotted spans 182 to 327 (SFREETETDL…SKLRAMMPWI (146 aa)). Residues Asp-190, Glu-194, Glu-226, and Glu-230 each contribute to the Mg(2+) site. Ser-251 serves as a coordination point for substrate.

The protein belongs to the ketol-acid reductoisomerase family. Mg(2+) is required as a cofactor.

The catalysed reaction is (2R)-2,3-dihydroxy-3-methylbutanoate + NADP(+) = (2S)-2-acetolactate + NADPH + H(+). It catalyses the reaction (2R,3R)-2,3-dihydroxy-3-methylpentanoate + NADP(+) = (S)-2-ethyl-2-hydroxy-3-oxobutanoate + NADPH + H(+). Its pathway is amino-acid biosynthesis; L-isoleucine biosynthesis; L-isoleucine from 2-oxobutanoate: step 2/4. It participates in amino-acid biosynthesis; L-valine biosynthesis; L-valine from pyruvate: step 2/4. In terms of biological role, involved in the biosynthesis of branched-chain amino acids (BCAA). Catalyzes an alkyl-migration followed by a ketol-acid reduction of (S)-2-acetolactate (S2AL) to yield (R)-2,3-dihydroxy-isovalerate. In the isomerase reaction, S2AL is rearranged via a Mg-dependent methyl migration to produce 3-hydroxy-3-methyl-2-ketobutyrate (HMKB). In the reductase reaction, this 2-ketoacid undergoes a metal-dependent reduction by NADPH to yield (R)-2,3-dihydroxy-isovalerate. This is Ketol-acid reductoisomerase (NADP(+)) from Acinetobacter baylyi (strain ATCC 33305 / BD413 / ADP1).